Reading from the N-terminus, the 361-residue chain is tRNA 2-selenouridine synthase (361 aa).

The Rhodanese domain occupies Val-12–Glu-135. The active-site S-selanylcysteine intermediate is Cys-95.

It belongs to the SelU family. In terms of assembly, monomer.

The catalysed reaction is 5-methylaminomethyl-2-thiouridine(34) in tRNA + selenophosphate + (2E)-geranyl diphosphate + H2O + H(+) = 5-methylaminomethyl-2-selenouridine(34) in tRNA + (2E)-thiogeraniol + phosphate + diphosphate. It catalyses the reaction 5-methylaminomethyl-2-thiouridine(34) in tRNA + (2E)-geranyl diphosphate = 5-methylaminomethyl-S-(2E)-geranyl-thiouridine(34) in tRNA + diphosphate. The enzyme catalyses 5-methylaminomethyl-S-(2E)-geranyl-thiouridine(34) in tRNA + selenophosphate + H(+) = 5-methylaminomethyl-2-(Se-phospho)selenouridine(34) in tRNA + (2E)-thiogeraniol. It carries out the reaction 5-methylaminomethyl-2-(Se-phospho)selenouridine(34) in tRNA + H2O = 5-methylaminomethyl-2-selenouridine(34) in tRNA + phosphate. In terms of biological role, involved in the post-transcriptional modification of the uridine at the wobble position (U34) of tRNA(Lys), tRNA(Glu) and tRNA(Gln). Catalyzes the conversion of 2-thiouridine (S2U-RNA) to 2-selenouridine (Se2U-RNA). Acts in a two-step process involving geranylation of 2-thiouridine (S2U) to S-geranyl-2-thiouridine (geS2U) and subsequent selenation of the latter derivative to 2-selenouridine (Se2U) in the tRNA chain. The polypeptide is tRNA 2-selenouridine synthase (Hydrogenovibrio crunogenus (strain DSM 25203 / XCL-2) (Thiomicrospira crunogena)).